Here is a 427-residue protein sequence, read N- to C-terminus: MTEAMKITLSTQPADARWGEKATYSINNDGITLHLNGADDLGLIQRAARKIDGLGIKHVQLSGEGWDADRCWAFWQGYKAPKGTRKVEWPDLDDAQRQELDNRLMIIDWVRDTINAPAEELGPSQLAQRAVDLISNVAGDRVTYRITKGEDLRDQGYMGLHTVGRGSERSPVLLALDYNPTGDKEAPVYACLVGKGITFDSGGYSIKQTAFMDSMKSDMGGAATVTGALAFAITRGLNKRVKLFLCCADNLISGNAFKLGDIITYRNGKKVEVMNTDAEGRLVLADGLIDASAQKPELIIDAATLTGAAKTALGNDYHALFSFDDALAGRLLESAAQENEPFWRLPLAEFHRSQLPSNFAELNNTGSAAYPAGASTAAGFLSHFVENYKQGWLHIDCSATYRKAPVEQWSAGATGLGVRTIANLLTA.

The Mn(2+) site is built by Lys-195 and Asp-200. Lys-207 is an active-site residue. The Mn(2+) site is built by Asp-218, Asp-277, and Glu-279. Arg-281 is a catalytic residue.

This sequence belongs to the peptidase M17 family. In terms of assembly, homohexamer. Requires Mn(2+) as cofactor.

Its subcellular location is the cytoplasm. It catalyses the reaction Release of an N-terminal amino acid, Xaa, from a peptide or arylamide. Xaa is preferably Glu or Asp but may be other amino acids, including Leu, Met, His, Cys and Gln.. Its function is as follows. Probably plays an important role in intracellular peptide degradation. This chain is Peptidase B, found in Escherichia fergusonii (strain ATCC 35469 / DSM 13698 / CCUG 18766 / IAM 14443 / JCM 21226 / LMG 7866 / NBRC 102419 / NCTC 12128 / CDC 0568-73).